A 528-amino-acid polypeptide reads, in one-letter code: CTD kinase subunit alpha (528 aa).

The segment covering 1 to 15 has biased composition (polar residues); it reads MSYNNGNTYSKSYSR. The disordered stretch occupies residues 1 to 148; the sequence is MSYNNGNTYS…NTSNDIKNGY (148 aa). A Phosphoserine; by autocatalysis modification is found at S14. The Nuclear localization signal signature appears at 37 to 44; sequence PPKRIRTD. The span at 45 to 103 shows a compositional bias: polar residues; it reads SGYQSNMDNISSHRVNSNDQPGHTKSRGNNNLSRYNDTSFQTSSRYQGSRYNNNNTSYE. Residues 104–118 show a composition bias toward basic and acidic residues; that stretch reads NRPKSIKRDETKAEF. Polar residues predominate over residues 134 to 144; it reads YNNSSNTSNDI. A Protein kinase domain is found at 183 to 469; that stretch reads YLRIMQVGEG…ATEALQSDYF (287 aa). ATP contacts are provided by residues 189–197 and K212; that span reads VGEGTYGKV. Catalysis depends on D306, which acts as the Proton acceptor. Position 338 is a phosphothreonine (T338). Residues 497-528 are disordered; that stretch reads QKRPNILSTNTNNKGNGNSNNNNNNNNDDDDK. The segment covering 504 to 522 has biased composition (low complexity); that stretch reads STNTNNKGNGNSNNNNNNN.

It belongs to the protein kinase superfamily. CMGC Ser/Thr protein kinase family. CDC2/CDKX subfamily. CTDK-I consists of three subunits, CTK1, CTK2 and CTK3 (also called alpha, beta and gamma). Interacts directly with the CTK2 and CTK3 subunits, this interaction is required for kinase activity. Interacts with RNA polymerase I. Interacts with SNF1, but only at low glucose concentrations. Interacts with translating ribosomes. Phosphorylated on Thr-338 by CAK1. Phosphorylation is essential for the elevated CTD Ser-2 phosphorylation and required to activate transcription of stationary-phase genes during the diauxic shift.

It localises to the nucleus. The protein localises to the nucleolus. The protein resides in the cytoplasm. It carries out the reaction [DNA-directed RNA polymerase] + ATP = phospho-[DNA-directed RNA polymerase] + ADP + H(+). Catalytic subunit of the CTDK-I complex, which hyperphosphorylates the C-terminal heptapeptide repeat domain (CTD) of the largest RNA polymerase II subunit. CTDK-I phosphorylates 'Ser-5' if the CTD substrate is not phosphorylated at 'Ser-5', but will phosphorylate 'Ser-2' of a CTD substrate if 'Ser-5' is already phosphorylated. CTDK-I is also more reactive toward substrates that are prephosphorylated at 'Ser-2' or 'Ser-5' compared with an unphosphorylated CTD substrate, therefore efficiently creating doubly phosphorylated CTD repeats. Involved in RNA polymerase II transcriptional elongation, and through PTI1, pre-mRNA 3'-end processing. Participates in both positive and negative regulation of CTD phosphorylation. Required for DNA damage induced transcription, including the expression of the RNR genes, and reprogramming of gene expression upon amino acid starvation. Required for SET2 mediated H3K36 methylation. Also regulates H3K4 methylation. Controls the maintenance of suppressive chromatin in the coding regions of genes by both promoting H3K36 methylation, which leads to histone deacetylation, and catalyzing phosphorylation of the CTD required to localize H3K4 chromatin modification specifically to the 5' ends of genes, thereby creating a boundary for H3K4 methylation that prevents a mark associated with transcriptional initiation from spreading into the bodies of genes. Involved in RNA polymerase I transcription. Involved in telomere maintenance. Acts together with SNF1 to induce GSY2 transcription in response to glucose limitation. Involved in the adaptation to alternative carbon sources, including galactose, glycerol and ethanol, but not raffinose. Required for the integrity of the rDNA locus. Functions in translation elongation by enhancing decoding fidelity. Needed for translational accuracy by phosphorylating RPS2. The sequence is that of CTD kinase subunit alpha (CTK1) from Saccharomyces cerevisiae (strain ATCC 204508 / S288c) (Baker's yeast).